Here is a 669-residue protein sequence, read N- to C-terminus: Major S-layer protein (669 aa).

An N-terminal signal peptide occupies residues 1-24; that stretch reads MKRFAAVSLAALMLLTVFASAASA. N-linked (GlcNAc...) asparagine glycosylation is found at Asn-36, Asn-70, Asn-116, Asn-600, and Asn-607. Positions 588 to 648 are disordered; sequence DGEVVDDDED…PTEADGTTPG (61 aa). Over residues 590–627 the composition is skewed to acidic residues; the sequence is EVVDDDEDDDNVTEPVDNDTEVEEPTEEPTEGPTEEPT. A helical transmembrane segment spans residues 645–665; it reads TTPGFGVVLGLVGLLAVVYLV.

It belongs to the Methanosarcinales S-layer protein family. Post-translationally, glycosylated.

Its subcellular location is the secreted. The protein localises to the cell wall. It localises to the S-layer. The protein resides in the cell membrane. In terms of biological role, S-layer protein. The S-layer is a paracrystalline mono-layered assembly of proteins which coat the surface of the cell. In Methanosarcina mazei (strain ATCC BAA-159 / DSM 3647 / Goe1 / Go1 / JCM 11833 / OCM 88) (Methanosarcina frisia), this protein is Major S-layer protein.